A 183-amino-acid chain; its full sequence is uncharacterized protein (183 aa).

A helical membrane pass occupies residues 153 to 175; sequence LLYVFIRLFAGCLKVFRLCILWL.

The protein localises to the membrane. This is an uncharacterized protein from Saccharomyces cerevisiae (strain ATCC 204508 / S288c) (Baker's yeast).